The chain runs to 97 residues: Large ribosomal subunit protein eL21 (97 aa).

The protein belongs to the eukaryotic ribosomal protein eL21 family.

The sequence is that of Large ribosomal subunit protein eL21 from Methanosarcina mazei (strain ATCC BAA-159 / DSM 3647 / Goe1 / Go1 / JCM 11833 / OCM 88) (Methanosarcina frisia).